The sequence spans 122 residues: Large ribosomal subunit protein uL14 (122 aa).

This sequence belongs to the universal ribosomal protein uL14 family. In terms of assembly, part of the 50S ribosomal subunit. Forms a cluster with proteins L3 and L19. In the 70S ribosome, L14 and L19 interact and together make contacts with the 16S rRNA in bridges B5 and B8.

Binds to 23S rRNA. Forms part of two intersubunit bridges in the 70S ribosome. This chain is Large ribosomal subunit protein uL14, found in Geobacillus kaustophilus (strain HTA426).